Here is a 262-residue protein sequence, read N- to C-terminus: Apolipoprotein A-I (262 aa).

Positions 1-18 are cleaved as a signal peptide; it reads MKFLALALTILLAAATQA. Residues 32 to 63 form a 3 X approximate tandem repeats region; it reads VKVAMMEYMAQVKETGQRSIDLLDDTEFKEYK. 2 tandem repeats follow at residues 64-85 and 87-107. The tract at residues 64-262 is 10 X approximate tandem repeats; the sequence is VQLSQSLDNL…YETISQAMKA (199 aa). The 3; half-length repeat unit spans residues 108–118; sequence KDVEDVRTQLE. 5 tandem repeats follow at residues 119–140, 141–162, 163–184, 185–206, and 207–228. A 9; half-length repeat occupies 229 to 239; it reads PLTNDFKGQVG. Repeat unit 10 spans residues 240–262; that stretch reads PAAEQAKEKLMDFYETISQAMKA.

This sequence belongs to the apolipoprotein A1/A4/E family.

The protein resides in the secreted. Participates in the reverse transport of cholesterol from tissues to the liver for excretion by promoting cholesterol efflux from tissues and by acting as a cofactor for the lecithin cholesterol acyltransferase (LCAT). The sequence is that of Apolipoprotein A-I (apoa1) from Salmo trutta (Brown trout).